Here is a 573-residue protein sequence, read N- to C-terminus: E3 ubiquitin-protein ligase RNF168 (573 aa).

An RING-type zinc finger spans residues 16–55; that stretch reads CQICVEILFEPVTLPCNHTLCKPCFESTVEKASLCCPFCR. Phosphoserine is present on S70. The LR motif 1 signature appears at 110 to 128; it reads LSKPGELRREYEEEISKVE. The UMI motif signature appears at 143 to 151; it reads EEYIQKLLA. Disordered regions lie at residues 153–174 and 196–277; these read EEEE…QLKS and ASPL…EDMP. The span at 157–174 shows a compositional bias: basic and acidic residues; it reads EKRQAEKRHREMEEQLKS. The short motif at 168 to 191 is the MIU motif 1 element; sequence MEEQLKSDEELARRLSLDINNFCE. Position 197 is a phosphoserine (S197). K210 is covalently cross-linked (Glycyl lysine isopeptide (Lys-Gly) (interchain with G-Cter in SUMO2)). A compositionally biased stretch (polar residues) spans 231–243; it reads PKSQLGSASQSEV. The segment covering 245–261 has biased composition (basic and acidic residues); the sequence is QEDRKSSMSKKIDDNSD. T363 bears the Phosphothreonine mark. S416 carries the post-translational modification Phosphoserine. Residues 440–463 carry the MIU motif 2 motif; the sequence is RHKQEKQDRLLALQLQEEVDQEQM. The disordered stretch occupies residues 456-528; sequence EEVDQEQMRP…NHQQPSFKIQ (73 aa). A compositionally biased stretch (basic and acidic residues) spans 461–470; sequence EQMRPDRQKG. An LR motif 2 motif is present at residues 467–478; it reads RQKGSPDGYQLR. The residue at position 471 (S471) is a Phosphoserine. A compositionally biased stretch (basic and acidic residues) spans 494 to 519; that stretch reads NSRDRNSKRQTELEQPKPRTDSKNEN. A Glycyl lysine isopeptide (Lys-Gly) (interchain with G-Cter in SUMO2) cross-link involves residue K530. Positions 540-573 are disordered; it reads NSTNDNCNVSKTAHSLQPSKSQKSIFQMFQRVTK.

The protein belongs to the RNF168 family. In terms of assembly, monomer. Interacts with UBE2N/UBC13. Post-translationally, sumoylated with SUMO1 by PIAS4 in response to double-strand breaks (DSBs). Ubiquitinated.

It localises to the nucleus. It carries out the reaction S-ubiquitinyl-[E2 ubiquitin-conjugating enzyme]-L-cysteine + [acceptor protein]-L-lysine = [E2 ubiquitin-conjugating enzyme]-L-cysteine + N(6)-ubiquitinyl-[acceptor protein]-L-lysine.. Its pathway is protein modification; protein ubiquitination. Functionally, E3 ubiquitin-protein ligase required for accumulation of repair proteins to sites of DNA damage. Acts with UBE2N/UBC13 to amplify the RNF8-dependent histone ubiquitination. Recruited to sites of DNA damage at double-strand breaks (DSBs) by binding to ubiquitinated histone H2A and H2AX and amplifies the RNF8-dependent H2A ubiquitination, promoting the formation of 'Lys-63'-linked ubiquitin conjugates. This leads to concentrate ubiquitinated histones H2A and H2AX at DNA lesions to the threshold required for recruitment of TP53BP1 and BRCA1. Also recruited at DNA interstrand cross-links (ICLs) sites and promotes accumulation of 'Lys-63'-linked ubiquitination of histones H2A and H2AX, leading to recruitment of FAAP20 and Fanconi anemia (FA) complex, followed by interstrand cross-link repair. H2A ubiquitination also mediates the ATM-dependent transcriptional silencing at regions flanking DSBs in cis, a mechanism to avoid collision between transcription and repair intermediates. Also involved in class switch recombination in immune system, via its role in regulation of DSBs repair. Following DNA damage, promotes the ubiquitination and degradation of JMJD2A/KDM4A in collaboration with RNF8, leading to unmask H4K20me2 mark and promote the recruitment of TP53BP1 at DNA damage sites. Not able to initiate 'Lys-63'-linked ubiquitination in vitro; possibly due to partial occlusion of the UBE2N/UBC13-binding region. Catalyzes monoubiquitination of 'Lys-13' and 'Lys-15' of nucleosomal histone H2A (H2AK13Ub and H2AK15Ub, respectively). The sequence is that of E3 ubiquitin-protein ligase RNF168 from Bos taurus (Bovine).